Here is a 513-residue protein sequence, read N- to C-terminus: Trigger factor (513 aa).

A PPIase FKBP-type domain is found at 164-249; that stretch reads GDQIIIDFLG…VKAVKNAGEF (86 aa). The segment at 436–513 is disordered; the sequence is QAAIEAEEGA…KAPAKKKAEG (78 aa). Residues 452-461 show a composition bias toward basic residues; the sequence is AKKAPAKKKA. Residues 489 to 498 are compositionally biased toward low complexity; it reads ADEAPAAEEA. Residues 501–513 show a composition bias toward basic residues; the sequence is AKKKAPAKKKAEG.

It belongs to the FKBP-type PPIase family. Tig subfamily.

The protein localises to the cytoplasm. It carries out the reaction [protein]-peptidylproline (omega=180) = [protein]-peptidylproline (omega=0). In terms of biological role, involved in protein export. Acts as a chaperone by maintaining the newly synthesized protein in an open conformation. Functions as a peptidyl-prolyl cis-trans isomerase. The sequence is that of Trigger factor from Novosphingobium aromaticivorans (strain ATCC 700278 / DSM 12444 / CCUG 56034 / CIP 105152 / NBRC 16084 / F199).